We begin with the raw amino-acid sequence, 480 residues long: Thiamine biosynthesis bifunctional protein ThiM/ThiE (480 aa).

Residues 1–287 (MSTLPERVRE…LYVLVSGATP (287 aa)) form a hydroxyethylthiazole kinase region. Residue Met-40 coordinates 5-(2-hydroxyethyl)-4-methylthiazole. 2 residues coordinate ATP: Arg-116 and Thr-164. Gly-191 lines the 5-(2-hydroxyethyl)-4-methylthiazole pocket. A thiamine-phosphate synthase region spans residues 288–480 (PDVLEAVLQA…VRRAKGEVSA (193 aa)). Residues 303–307 (QFREK) and Asn-335 each bind 4-amino-2-methyl-5-(diphosphooxymethyl)pyrimidine. Mg(2+) contacts are provided by Asp-336 and Asp-355. 4-amino-2-methyl-5-(diphosphooxymethyl)pyrimidine is bound at residue Thr-374. 400 to 402 (TPS) contacts 2-[(2R,5Z)-2-carboxy-4-methylthiazol-5(2H)-ylidene]ethyl phosphate. Residue Lys-403 coordinates 4-amino-2-methyl-5-(diphosphooxymethyl)pyrimidine. 2-[(2R,5Z)-2-carboxy-4-methylthiazol-5(2H)-ylidene]ethyl phosphate is bound by residues Gly-431 and 451-452 (IS).

This sequence in the N-terminal section; belongs to the Thz kinase family. In the C-terminal section; belongs to the thiamine-phosphate synthase family. Mg(2+) is required as a cofactor.

It catalyses the reaction 5-(2-hydroxyethyl)-4-methylthiazole + ATP = 4-methyl-5-(2-phosphooxyethyl)-thiazole + ADP + H(+). It carries out the reaction 2-[(2R,5Z)-2-carboxy-4-methylthiazol-5(2H)-ylidene]ethyl phosphate + 4-amino-2-methyl-5-(diphosphooxymethyl)pyrimidine + 2 H(+) = thiamine phosphate + CO2 + diphosphate. The enzyme catalyses 2-(2-carboxy-4-methylthiazol-5-yl)ethyl phosphate + 4-amino-2-methyl-5-(diphosphooxymethyl)pyrimidine + 2 H(+) = thiamine phosphate + CO2 + diphosphate. The catalysed reaction is 4-methyl-5-(2-phosphooxyethyl)-thiazole + 4-amino-2-methyl-5-(diphosphooxymethyl)pyrimidine + H(+) = thiamine phosphate + diphosphate. It participates in cofactor biosynthesis; thiamine diphosphate biosynthesis; 4-methyl-5-(2-phosphoethyl)-thiazole from 5-(2-hydroxyethyl)-4-methylthiazole: step 1/1. Its pathway is cofactor biosynthesis; thiamine diphosphate biosynthesis; thiamine phosphate from 4-amino-2-methyl-5-diphosphomethylpyrimidine and 4-methyl-5-(2-phosphoethyl)-thiazole: step 1/1. In terms of biological role, condenses 4-methyl-5-(beta-hydroxyethyl)thiazole monophosphate (THZ-P) and 2-methyl-4-amino-5-hydroxymethyl pyrimidine pyrophosphate (HMP-PP) to form thiamine monophosphate (TMP). This Symbiobacterium thermophilum (strain DSM 24528 / JCM 14929 / IAM 14863 / T) protein is Thiamine biosynthesis bifunctional protein ThiM/ThiE (thiM/thiE).